Here is a 473-residue protein sequence, read N- to C-terminus: Phosphatidylserine synthase 1 (473 aa).

A2 carries the post-translational modification N-acetylalanine. Residues 2–35 (ASCVGSRTLSKDDVNYKMHFRMINEQQVEDITID) lie on the Cytoplasmic side of the membrane. The chain crosses the membrane as a helical span at residues 36-56 (FFYRPHTITLLSFTIVSLMYF). Topologically, residues 57–72 (AFTRDDSVPEDNIWRG) are lumenal. The helical transmembrane segment at 73-93 (ILSVIFFFLIISVLAFPNGPF) threads the bilayer. The Cytoplasmic portion of the chain corresponds to 94 to 102 (TRPHPALWR). The chain crosses the membrane as a helical span at residues 103-123 (MVFGLSVLYFLFLVFLLFLNF). The Lumenal portion of the chain corresponds to 124–186 (EQVKSLMYWL…AMKALLIRSY (63 aa)). A helical transmembrane segment spans residues 187–207 (GLCWTISITWELTELFFMHLL). Topologically, residues 208-216 (PNFAECWWD) are cytoplasmic. Residues 217-237 (QVILDILLCNGGGIWLGMVVC) traverse the membrane as a helical segment. Residues 238–286 (RFLEMRTYHWASFKDIHTTTGKIKRAVLQFTPASWTYVRWFDPKSSFQR) lie on the Lumenal side of the membrane. The helical transmembrane segment at 287–307 (VAGVYLFMIIWQLTELNTFFL) threads the bilayer. Residues 308 to 319 (KHIFVFQASHPL) lie on the Cytoplasmic side of the membrane. The helical transmembrane segment at 320–342 (SWGRILFIGGITAPTVRQYYAYL) threads the bilayer. The Lumenal portion of the chain corresponds to 343 to 355 (TDTQCKRVGTQCW). A helical transmembrane segment spans residues 356 to 376 (VFGVIGFLEAIVCIKFGQDLF). Residues 377–383 (SKTQILY) are Cytoplasmic-facing. A helical membrane pass occupies residues 384-404 (VVLWLLCVAFTTFLCLYGMIW). Residues 405-473 (YAEHYGHREK…SKVTNGVGKK (69 aa)) are Lumenal-facing. Phosphoserine is present on residues S417, S425, S442, and S454. The tract at residues 430 to 473 (WHHRKGTKGSEDSPPKHAGNNESHSSRRRNRHSKSKVTNGVGKK) is disordered. Residues 455–464 (SRRRNRHSKS) are compositionally biased toward basic residues.

This sequence belongs to the phosphatidyl serine synthase family.

Its subcellular location is the endoplasmic reticulum membrane. It catalyses the reaction a 1,2-diacyl-sn-glycero-3-phosphoethanolamine + L-serine = a 1,2-diacyl-sn-glycero-3-phospho-L-serine + ethanolamine. The enzyme catalyses a 1,2-diacyl-sn-glycero-3-phosphocholine + L-serine = a 1,2-diacyl-sn-glycero-3-phospho-L-serine + choline. The protein operates within phospholipid metabolism; phosphatidylserine biosynthesis. With respect to regulation, requires calcium ions. Inhibited by exogenous phosphatidylserine. Its function is as follows. Catalyzes a base-exchange reaction in which the polar head group of phosphatidylethanolamine (PE) or phosphatidylcholine (PC) is replaced by L-serine. Catalyzes mainly the conversion of phosphatidylcholine. Also converts, in vitro and to a lesser extent, phosphatidylethanolamine. The sequence is that of Phosphatidylserine synthase 1 (PTDSS1) from Homo sapiens (Human).